Reading from the N-terminus, the 178-residue chain is ATP synthase subunit delta (178 aa).

It belongs to the ATPase delta chain family. In terms of assembly, F-type ATPases have 2 components, F(1) - the catalytic core - and F(0) - the membrane proton channel. F(1) has five subunits: alpha(3), beta(3), gamma(1), delta(1), epsilon(1). F(0) has three main subunits: a(1), b(2) and c(10-14). The alpha and beta chains form an alternating ring which encloses part of the gamma chain. F(1) is attached to F(0) by a central stalk formed by the gamma and epsilon chains, while a peripheral stalk is formed by the delta and b chains.

The protein localises to the cell inner membrane. Its function is as follows. F(1)F(0) ATP synthase produces ATP from ADP in the presence of a proton or sodium gradient. F-type ATPases consist of two structural domains, F(1) containing the extramembraneous catalytic core and F(0) containing the membrane proton channel, linked together by a central stalk and a peripheral stalk. During catalysis, ATP synthesis in the catalytic domain of F(1) is coupled via a rotary mechanism of the central stalk subunits to proton translocation. This protein is part of the stalk that links CF(0) to CF(1). It either transmits conformational changes from CF(0) to CF(1) or is implicated in proton conduction. In Marinobacter nauticus (strain ATCC 700491 / DSM 11845 / VT8) (Marinobacter aquaeolei), this protein is ATP synthase subunit delta.